A 621-amino-acid chain; its full sequence is Chaperone protein HscA homolog (621 aa).

The protein belongs to the heat shock protein 70 family.

Functionally, chaperone involved in the maturation of iron-sulfur cluster-containing proteins. Has a low intrinsic ATPase activity which is markedly stimulated by HscB. This Ralstonia pickettii (strain 12J) protein is Chaperone protein HscA homolog.